A 102-amino-acid chain; its full sequence is N(4)-acetylcytidine amidohydrolase (102 aa).

Positions 6-92 constitute an ASCH domain; sequence TFFGRFEADI…VIKAIYPGLD (87 aa). The Proton acceptor role is filled by Lys-20. Residue Thr-23 is the Nucleophile of the active site. The Proton donor role is filled by Glu-73.

The protein belongs to the N(4)-acetylcytidine amidohydrolase family.

The catalysed reaction is N(4)-acetylcytidine + H2O = cytidine + acetate + H(+). The enzyme catalyses N(4)-acetyl-2'-deoxycytidine + H2O = 2'-deoxycytidine + acetate + H(+). It catalyses the reaction N(4)-acetylcytosine + H2O = cytosine + acetate + H(+). Functionally, catalyzes the hydrolysis of N(4)-acetylcytidine (ac4C). The protein is N(4)-acetylcytidine amidohydrolase of Yersinia pseudotuberculosis serotype O:1b (strain IP 31758).